The chain runs to 189 residues: S-protein homolog 26 (189 aa).

A signal peptide spans 1-25 (MISMNRLSILLFVFAFGLTMMSNTA).

Belongs to the plant self-incompatibility (S1) protein family.

Its subcellular location is the secreted. The protein is S-protein homolog 26 of Arabidopsis thaliana (Mouse-ear cress).